Here is a 333-residue protein sequence, read N- to C-terminus: MFRAAAPGQLRRAASLLRFQSTLVIAEHANDSLAPITLNTITAAGRLGGEVSCLVAGTKCDKVVQDLCKVAGVAKVLVAQHDAYKGLLPEELTPLILETQKQFSYTHICAGASAFGKNLLPRVAAKLNVAPVSDIIEIKSPDTFVRTIYAGNALCTVKCDEKVKVFSVRGTSFEAAATSGGSASSEKAPSSSSVGISEWLDQKLTKSDRPELTGAKVVVSGGRGLKSGENFKLLYDLADQLHAAVGASRAAVDAGFVPNDMQVGQTGKIVAPELYIAVGISGAIQHLAGMKDSKTIVAINKDPEAPIFQVADYGIVADLFKVVPEMTEILKKK.

The transit peptide at 1–19 directs the protein to the mitochondrion; that stretch reads MFRAAAPGQLRRAASLLRF. The segment at 20 to 204 is domain I; the sequence is QSTLVIAEHA…GISEWLDQKL (185 aa). Lysine 59 is modified (N6-acetyllysine; alternate). An N6-succinyllysine; alternate modification is found at lysine 59. Lysine 62 carries the post-translational modification N6-acetyllysine. An N6-acetyllysine; alternate modification is found at lysine 69. An N6-succinyllysine; alternate modification is found at lysine 69. At lysine 75 the chain carries N6-acetyllysine. At lysine 85 the chain carries N6-acetyllysine; alternate. An N6-succinyllysine; alternate modification is found at lysine 85. Position 93 is a phosphothreonine (threonine 93). N6-acetyllysine is present on residues lysine 101 and lysine 139. The residue at position 140 (serine 140) is a Phosphoserine. At lysine 158 the chain carries N6-acetyllysine; alternate. Lysine 158 is modified (N6-succinyllysine; alternate). Residue lysine 164 is modified to N6-acetyllysine. Lysine 187 is subject to N6-succinyllysine. An N6-acetyllysine; alternate modification is found at lysine 203. Position 203 is an N6-succinyllysine; alternate (lysine 203). Residues 205-333 form a domain II region; it reads TKSDRPELTG…PEMTEILKKK (129 aa). The residue at position 216 (lysine 216) is an N6-succinyllysine. Residue arginine 223 participates in FAD binding. Lysine 226 and lysine 232 each carry N6-acetyllysine; alternate. 2 positions are modified to N6-succinyllysine; alternate: lysine 226 and lysine 232. FAD contacts are provided by residues serine 248, 263-266, 281-286, and asparagine 300; these read VGQT and SGAIQH. Lysine 301 is modified (N6-succinyllysine). Residue 318-319 coordinates FAD; it reads DL.

Belongs to the ETF alpha-subunit/FixB family. Heterodimer composed of ETFA and ETFB. Identified in a complex that contains ETFA, ETFB and ETFRF1. Interaction with ETFRF1 promotes dissociation of the bound FAD and loss of electron transfer activity. Interacts with TASOR. FAD is required as a cofactor. As to expression, expressed in the spermatogonia, spermatocytes, ovary and granular cells within the cerebellum.

The protein resides in the mitochondrion matrix. Its function is as follows. Heterodimeric electron transfer flavoprotein that accepts electrons from several mitochondrial dehydrogenases, including acyl-CoA dehydrogenases, glutaryl-CoA and sarcosine dehydrogenase. It transfers the electrons to the main mitochondrial respiratory chain via ETF-ubiquinone oxidoreductase (ETF dehydrogenase). Required for normal mitochondrial fatty acid oxidation and normal amino acid metabolism. The polypeptide is Electron transfer flavoprotein subunit alpha, mitochondrial (Etfa) (Mus musculus (Mouse)).